Consider the following 773-residue polypeptide: Membrane-bound aldehyde dehydrogenase [pyrroloquinoline-quinone] (773 aa).

Positions 1–44 (MGRLNRFRLGKDGRREQASLSRRGFLVTSLGAGVMFGFARPSSA) form a signal peptide, tat-type signal.

Pyrroloquinoline quinone is required as a cofactor. Predicted to be exported by the Tat system. The position of the signal peptide cleavage has been experimentally proven.

Its subcellular location is the cell inner membrane. It catalyses the reaction an aldehyde + a quinone + H2O = a quinol + a carboxylate + H(+). The protein is Membrane-bound aldehyde dehydrogenase [pyrroloquinoline-quinone] of Gluconacetobacter polyoxogenes (Acetobacter polyoxogenes).